Here is a 2345-residue protein sequence, read N- to C-terminus: Nonribisomal peptide synthetase malG (2345 aa).

The adenylation 1 stretch occupies residues 226–620 (FSEQAKKNPT…VGRMGTVVKV (395 aa)). In terms of domain architecture, Carrier 1 spans 766-839 (TENETLLRLL…EAAGTMISAG (74 aa)). Position 800 is an O-(pantetheine 4'-phosphoryl)serine (Ser-800). The interval 877-1292 (EEIYPSTPLQ…LLCPSDKSKL (416 aa)) is condensation 1. An adenylation 2 region spans residues 1317-1707 (VRSERTAVSA…GRKNREVKLR (391 aa)). One can recognise a Carrier 2 domain in the interval 1843 to 1926 (QPHESTALFV…DIARLIEGVK (84 aa)). Residue Ser-1885 is modified to O-(pantetheine 4'-phosphoryl)serine. A reductase (R) domain region spans residues 1969–2256 (GMSVFLTGGT…PRQLNALQSE (288 aa)).

This sequence belongs to the NRP synthetase family.

The catalysed reaction is L-proline + L-tryptophan + 2 ATP + NADPH = (S)-3-(indol-3-ylmethyl)-6,7,8,8a-tetrahydropyrrolo[1,2-a]pyrazin-1-one + 2 AMP + 2 diphosphate + NADP(+) + H2O + H(+). Its function is as follows. Nonribisomal peptide synthetase; part of the gene cluster that mediates the biosynthesis of malbrancheamide, a dichlorinated fungal indole alkaloid that belongs to a family of natural products containing a characteristic bicyclo[2.2.2]diazaoctane core. The first step of malbrancheamide biosynthesis involves coupling of L-proline and L-tryptophan by malG, a bimodular NRPS, to produce L-Pro-L-Trp aldehyde through reductive offloading. This compound undergoes spontaneous cyclization and dehydration to give a dienamine which is reverse prenylated at C-2 by malE. The other prenyltransferase present in the cluster, malB, displays modest activity, suggesting that may be a redundant gene in the pathway. Subsequently, a [4+2] Diels-Alder cyclo-addition catalyzed by the bifunctional enzyme malC forms the characteristic bicyclo[2.2.2]diazaoctane ring of premalbrancheamid. Finally, the flavin-dependent halogenase malA catalyzes the iterative dichlorination of the indole ring of premalbrancheamide to yield C-9 monochlorinated malbrancheamide B, C-8 monochlorinated isomalbrancheamide B, and dichlorinated malbrancheamide. MalA is also able to brominate premalbrancheamide at C-9 to yield malbrancheamide C, and, to a lesser extend, at C-8 to yield isomalbrancheamide C. Finally, malA can brominate C-9 monochlorinated malbrancheamide B at C-8 to yield malbrancheamide D, or C-8 monochlorinated isomalbrancheamide B at C-9 to produce isomalbrancheamide D. The chain is Nonribisomal peptide synthetase malG from Malbranchea aurantiaca.